A 290-amino-acid polypeptide reads, in one-letter code: Dehydrodolichyl diphosphate synthase CPT3 (290 aa).

Aspartate 42 is a catalytic residue.

It belongs to the UPP synthase family. Requires Mg(2+) as cofactor. In terms of tissue distribution, expressed in leaf trichomes and stem trichomes. Expressed at low levels in young leaves, stems and old leaves.

Its subcellular location is the cytoplasm. It is found in the cytosol. The catalysed reaction is n isopentenyl diphosphate + (2E,6E)-farnesyl diphosphate = a di-trans,poly-cis-polyprenyl diphosphate + n diphosphate. In terms of biological role, catalyzes cis-prenyl chain elongation to produce the polyprenyl backbone of dolichol, a glycosyl carrier-lipid required for the biosynthesis of several classes of glycoprotein. The sequence is that of Dehydrodolichyl diphosphate synthase CPT3 from Solanum lycopersicum (Tomato).